The primary structure comprises 219 residues: Probable nicotinate-nucleotide adenylyltransferase (219 aa).

It belongs to the NadD family.

It catalyses the reaction nicotinate beta-D-ribonucleotide + ATP + H(+) = deamido-NAD(+) + diphosphate. It functions in the pathway cofactor biosynthesis; NAD(+) biosynthesis; deamido-NAD(+) from nicotinate D-ribonucleotide: step 1/1. Functionally, catalyzes the reversible adenylation of nicotinate mononucleotide (NaMN) to nicotinic acid adenine dinucleotide (NaAD). This Chromohalobacter salexigens (strain ATCC BAA-138 / DSM 3043 / CIP 106854 / NCIMB 13768 / 1H11) protein is Probable nicotinate-nucleotide adenylyltransferase.